A 741-amino-acid chain; its full sequence is Wall-associated receptor kinase 3 (741 aa).

The signal sequence occupies residues Met-1 to Gly-23. The Extracellular segment spans residues Gln-24 to Arg-342. N-linked (GlcNAc...) asparagine glycans are attached at residues Asn-37, Asn-59, Asn-78, Asn-100, Asn-103, Asn-141, Asn-192, Asn-199, Asn-232, Asn-246, Asn-261, and Asn-266. The EGF-like 1 domain occupies Gly-245 to Lys-292. Intrachain disulfides connect Cys-249-Cys-264, Cys-258-Cys-275, Cys-277-Cys-291, Cys-297-Cys-310, Cys-304-Cys-319, and Cys-321-Cys-333. The region spanning Asp-293 to Thr-334 is the EGF-like 2; calcium-binding domain. A glycan (N-linked (GlcNAc...) asparagine) is linked at Asn-303. N-linked (GlcNAc...) asparagine glycosylation is present at Asn-328. A helical transmembrane segment spans residues Ile-343–His-363. The Cytoplasmic portion of the chain corresponds to Ala-364–Arg-741. Thr-404 carries the post-translational modification Phosphothreonine. A Protein kinase domain is found at Tyr-415 to Ser-698. Residues Leu-421–Val-429 and Lys-443 contribute to the ATP site. Position 488 is a phosphotyrosine (Tyr-488). Asp-540 acts as the Proton acceptor in catalysis. Thr-574 and Thr-579 each carry phosphothreonine. Tyr-587 carries the phosphotyrosine modification.

It belongs to the protein kinase superfamily. Ser/Thr protein kinase family. Predominantly expressed in green tissues such as stems and leaves.

It is found in the membrane. The catalysed reaction is L-seryl-[protein] + ATP = O-phospho-L-seryl-[protein] + ADP + H(+). It carries out the reaction L-threonyl-[protein] + ATP = O-phospho-L-threonyl-[protein] + ADP + H(+). Its function is as follows. Serine/threonine-protein kinase that may function as a signaling receptor of extracellular matrix component. Binding to pectin may have significance in the control of cell expansion, morphogenesis and development. The sequence is that of Wall-associated receptor kinase 3 (WAK3) from Arabidopsis thaliana (Mouse-ear cress).